Here is a 32-residue protein sequence, read N- to C-terminus: Cytochrome b6-f complex subunit 8 (32 aa).

The helical transmembrane segment at 6–26 (IVGITWAALMVVFTFSLSLVV) threads the bilayer.

The protein belongs to the PetN family. In terms of assembly, the 4 large subunits of the cytochrome b6-f complex are cytochrome b6, subunit IV (17 kDa polypeptide, PetD), cytochrome f and the Rieske protein, while the 4 small subunits are PetG, PetL, PetM and PetN. The complex functions as a dimer.

The protein resides in the plastid. Its subcellular location is the chloroplast thylakoid membrane. Component of the cytochrome b6-f complex, which mediates electron transfer between photosystem II (PSII) and photosystem I (PSI), cyclic electron flow around PSI, and state transitions. In Pinus koraiensis (Korean pine), this protein is Cytochrome b6-f complex subunit 8.